A 244-amino-acid polypeptide reads, in one-letter code: NAD reductase coq12 (244 aa).

A disordered region spans residues 131–158 (NPLMNSEKNSTSVEDLPGSNRTQQTSSH). The span at 132 to 158 (PLMNSEKNSTSVEDLPGSNRTQQTSSH) shows a compositional bias: polar residues.

It is found in the mitochondrion. The catalysed reaction is a reduced flavin + NAD(+) = an oxidized flavin + NADH + 2 H(+). NADH-dependent flavin reductase that acts in the coenzyme Q biosynthetic pathway. Required for synthesis of the p-hydroxybenzoic acid (PHB) precursor to form a quinone backbone. This Schizosaccharomyces pombe (strain 972 / ATCC 24843) (Fission yeast) protein is NAD reductase coq12.